Here is a 156-residue protein sequence, read N- to C-terminus: Transcription elongation factor GreA (156 aa).

The stretch at 1–32 (MKKVRLTREGYEKLKKELEDLKRKFMYEISER) forms a coiled coil.

It belongs to the GreA/GreB family.

In terms of biological role, necessary for efficient RNA polymerase transcription elongation past template-encoded arresting sites. The arresting sites in DNA have the property of trapping a certain fraction of elongating RNA polymerases that pass through, resulting in locked ternary complexes. Cleavage of the nascent transcript by cleavage factors such as GreA or GreB allows the resumption of elongation from the new 3'terminus. GreA releases sequences of 2 to 3 nucleotides. In Thermotoga petrophila (strain ATCC BAA-488 / DSM 13995 / JCM 10881 / RKU-1), this protein is Transcription elongation factor GreA.